Here is a 480-residue protein sequence, read N- to C-terminus: Aspartyl/glutamyl-tRNA(Asn/Gln) amidotransferase subunit B (480 aa).

This sequence belongs to the GatB/GatE family. GatB subfamily. In terms of assembly, heterotrimer of A, B and C subunits.

The enzyme catalyses L-glutamyl-tRNA(Gln) + L-glutamine + ATP + H2O = L-glutaminyl-tRNA(Gln) + L-glutamate + ADP + phosphate + H(+). The catalysed reaction is L-aspartyl-tRNA(Asn) + L-glutamine + ATP + H2O = L-asparaginyl-tRNA(Asn) + L-glutamate + ADP + phosphate + 2 H(+). Allows the formation of correctly charged Asn-tRNA(Asn) or Gln-tRNA(Gln) through the transamidation of misacylated Asp-tRNA(Asn) or Glu-tRNA(Gln) in organisms which lack either or both of asparaginyl-tRNA or glutaminyl-tRNA synthetases. The reaction takes place in the presence of glutamine and ATP through an activated phospho-Asp-tRNA(Asn) or phospho-Glu-tRNA(Gln). The protein is Aspartyl/glutamyl-tRNA(Asn/Gln) amidotransferase subunit B of Streptococcus thermophilus (strain ATCC BAA-491 / LMD-9).